A 404-amino-acid polypeptide reads, in one-letter code: Cysteine desulfurase IscS (404 aa).

Pyridoxal 5'-phosphate is bound by residues 75–76 (AT), asparagine 155, glutamine 183, and 203–205 (SSH). An N6-(pyridoxal phosphate)lysine modification is found at lysine 206. Position 243 (threonine 243) interacts with pyridoxal 5'-phosphate. Cysteine 328 (cysteine persulfide intermediate) is an active-site residue. Cysteine 328 lines the [2Fe-2S] cluster pocket.

Belongs to the class-V pyridoxal-phosphate-dependent aminotransferase family. NifS/IscS subfamily. Homodimer. Forms a heterotetramer with IscU, interacts with other sulfur acceptors. Requires pyridoxal 5'-phosphate as cofactor.

It localises to the cytoplasm. It carries out the reaction (sulfur carrier)-H + L-cysteine = (sulfur carrier)-SH + L-alanine. Its pathway is cofactor biosynthesis; iron-sulfur cluster biosynthesis. In terms of biological role, master enzyme that delivers sulfur to a number of partners involved in Fe-S cluster assembly, tRNA modification or cofactor biosynthesis. Catalyzes the removal of elemental sulfur atoms from cysteine to produce alanine. Functions as a sulfur delivery protein for Fe-S cluster synthesis onto IscU, an Fe-S scaffold assembly protein, as well as other S acceptor proteins. This is Cysteine desulfurase IscS from Pasteurella multocida (strain Pm70).